The following is a 279-amino-acid chain: Large ribosomal subunit protein uL2 (279 aa).

Residues 223 to 279 (VVMNPVDHPHGGGEGRTSGGRHPVTPWGKPTKGKRTRSNKKTDSLIMRSRHLAKKKR) are disordered. Over residues 270-279 (RSRHLAKKKR) the composition is skewed to basic residues.

The protein belongs to the universal ribosomal protein uL2 family. In terms of assembly, part of the 50S ribosomal subunit. Forms a bridge to the 30S subunit in the 70S ribosome.

In terms of biological role, one of the primary rRNA binding proteins. Required for association of the 30S and 50S subunits to form the 70S ribosome, for tRNA binding and peptide bond formation. It has been suggested to have peptidyltransferase activity; this is somewhat controversial. Makes several contacts with the 16S rRNA in the 70S ribosome. The chain is Large ribosomal subunit protein uL2 from Rhodospirillum rubrum (strain ATCC 11170 / ATH 1.1.1 / DSM 467 / LMG 4362 / NCIMB 8255 / S1).